A 617-amino-acid chain; its full sequence is Neurosecretory protein VGF (617 aa).

An N-terminal signal peptide occupies residues 1-23 (MKTFTLPASVLFCFLLLIQGLGA). Disordered stretches follow at residues 29 to 75 (PDVF…GELF), 93 to 204 (RPAS…ESPG), and 239 to 262 (SESAPLPETHQFGEGVSSPKTHLG). The segment covering 48 to 64 (AVSRPKDDGVPEVRAAR) has biased composition (basic and acidic residues). Acidic residues predominate over residues 149-160 (DPEEDDRSEELE). The segment covering 182–197 (ETAAAETETRTHTLTR) has biased composition (low complexity). Gln-313 bears the Pyrrolidone carboxylic acid mark. Residues 345-364 (RQRDLGGRELQETQQERENE) are compositionally biased toward basic and acidic residues. The segment at 345-599 (RQRDLGGREL…EEADAEERRL (255 aa)) is disordered. Residues 378–397 (EDDVGEEDEEAAEAEAEAEE) show a composition bias toward acidic residues. Residues 418 to 436 (AEDKRSQEEAPGHRRKDAE) are compositionally biased toward basic and acidic residues. A Phosphoserine modification is found at Ser-423. Over residues 437–452 (GAEEGGEEDDDDEEMD) the composition is skewed to acidic residues. Over residues 491-501 (PPEPVPPPRAA) the composition is skewed to pro residues. Positions 577 to 599 (HHPDLEAQARRAQEEADAEERRL) are enriched in basic and acidic residues.

In terms of assembly, interacts with HSPA8 on cell membrane. Interacts with C3AR1. Interacts with C1QBP.

The protein resides in the secreted. It localises to the cytoplasmic vesicle. It is found in the secretory vesicle. In terms of biological role, secreted polyprotein that is packaged and proteolytically processed by prohormone convertases PCSK1 and PCSK2 in a cell-type-specific manner. VGF and peptides derived from its processing play many roles in neurogenesis and neuroplasticity associated with learning, memory, depression and chronic pain. Plays a role in the control of body fluid homeostasis by regulating vasopressin release. Suppresses presynaptic glutamatergic neurons connected to vasopressin neurons. Functionally, plays a role in the control of body fluid homeostasis by regulating vasopressin release. Activates GABAergic interneurons which are inhibitory neurons of the nervous system and thereby suppresses presynaptic glutamatergic neurons. Also stimulates feeding behavior in an orexin-dependent manner in the hypothalamus. Functions as a positive regulator for the activation of orexin neurons resulting in elevated gastric acid secretion and gastric emptying. Its function is as follows. Secreted multifunctional peptide that interacts with different receptors and thereby plays multiple physiological roles including modulation of energy expenditure, pain, response to stress, gastric regulation as well as lipolysis. Activates the G-protein-coupled receptor C3AR1 via a folding-upon-binding mechanism leading to enhanced lipolysis in adipocytes. Interacts with gC1qR receptor in macrophages and microglia causing increased levels of intracellular calcium and hypersensitivity. In terms of biological role, plays a role in the regulation of memory formation and depression-related behaviors potentially by influencing synaptic plasticity and neurogenesis. Induces acute and transient activation of the NTRK2/TRKB receptor and subsequent CREB phosphorylation. Also induces insulin secretion in insulinoma cells by increasing intracellular calcium mobilization. The sequence is that of Neurosecretory protein VGF from Mus musculus (Mouse).